The following is a 353-amino-acid chain: Photosystem II protein D1 (353 aa).

N-acetylthreonine is present on Thr2. The residue at position 2 (Thr2) is a Phosphothreonine. 3 helical membrane-spanning segments follow: residues 29-46 (YIGW…TATS), 118-133 (HFLL…EWEL), and 142-156 (WIAV…AATA). Position 118 (His118) interacts with chlorophyll a. Residue Tyr126 participates in pheophytin a binding. [CaMn4O5] cluster is bound by residues Asp170 and Glu189. Residues 197-218 (FHMLGVAGVFGGSLFSAMHGSL) traverse the membrane as a helical segment. His198 contributes to the chlorophyll a binding site. A quinone-binding positions include His215 and 264 to 265 (SF). His215 provides a ligand contact to Fe cation. His272 is a Fe cation binding site. The chain crosses the membrane as a helical span at residues 274–288 (LLAAWPVVGIWFTAL). [CaMn4O5] cluster contacts are provided by His332, Glu333, Asp342, and Ala344. A propeptide spanning residues 345–353 (AVEAPSTNG) is cleaved from the precursor.

This sequence belongs to the reaction center PufL/M/PsbA/D family. In terms of assembly, PSII is composed of 1 copy each of membrane proteins PsbA, PsbB, PsbC, PsbD, PsbE, PsbF, PsbH, PsbI, PsbJ, PsbK, PsbL, PsbM, PsbT, PsbX, PsbY, PsbZ, Psb30/Ycf12, at least 3 peripheral proteins of the oxygen-evolving complex and a large number of cofactors. It forms dimeric complexes. The cofactor is The D1/D2 heterodimer binds P680, chlorophylls that are the primary electron donor of PSII, and subsequent electron acceptors. It shares a non-heme iron and each subunit binds pheophytin, quinone, additional chlorophylls, carotenoids and lipids. D1 provides most of the ligands for the Mn4-Ca-O5 cluster of the oxygen-evolving complex (OEC). There is also a Cl(-1) ion associated with D1 and D2, which is required for oxygen evolution. The PSII complex binds additional chlorophylls, carotenoids and specific lipids.. Post-translationally, tyr-161 forms a radical intermediate that is referred to as redox-active TyrZ, YZ or Y-Z. C-terminally processed by CTPA; processing is essential to allow assembly of the oxygen-evolving complex and thus photosynthetic growth.

Its subcellular location is the plastid. It is found in the chloroplast thylakoid membrane. The catalysed reaction is 2 a plastoquinone + 4 hnu + 2 H2O = 2 a plastoquinol + O2. Functionally, photosystem II (PSII) is a light-driven water:plastoquinone oxidoreductase that uses light energy to abstract electrons from H(2)O, generating O(2) and a proton gradient subsequently used for ATP formation. It consists of a core antenna complex that captures photons, and an electron transfer chain that converts photonic excitation into a charge separation. The D1/D2 (PsbA/PsbD) reaction center heterodimer binds P680, the primary electron donor of PSII as well as several subsequent electron acceptors. This Dioscorea elephantipes (Elephant's foot yam) protein is Photosystem II protein D1.